The primary structure comprises 183 residues: Dual-action ribosomal maturation protein DarP (183 aa).

The disordered stretch occupies residues Met-1 to Val-27. The span at Val-9 to Glu-18 shows a compositional bias: acidic residues.

Belongs to the DarP family.

It is found in the cytoplasm. In terms of biological role, member of a network of 50S ribosomal subunit biogenesis factors which assembles along the 30S-50S interface, preventing incorrect 23S rRNA structures from forming. Promotes peptidyl transferase center (PTC) maturation. This chain is Dual-action ribosomal maturation protein DarP, found in Bordetella pertussis (strain Tohama I / ATCC BAA-589 / NCTC 13251).